Consider the following 126-residue polypeptide: Alpha-1-purothionin (126 aa).

An N-terminal signal peptide occupies residues 1 to 16 (CLLILGLVLEQLQVEG). Cystine bridges form between C19-C55, C20-C47, C28-C45, and C32-C41. The propeptide at 62–126 (LALESNSDEP…DAGLPSLDAY (65 aa)) is acidic domain.

Belongs to the plant thionin (TC 1.C.44) family. 4 C-C subfamily.

The protein resides in the secreted. Thionins are small plant proteins which are toxic to animal cells. They seem to exert their toxic effect at the level of the cell membrane. Their precise function is not known. This Triticum aestivum (Wheat) protein is Alpha-1-purothionin (THI1.1).